The sequence spans 473 residues: Aspartyl/glutamyl-tRNA(Asn/Gln) amidotransferase subunit B (473 aa).

Belongs to the GatB/GatE family. GatB subfamily. As to quaternary structure, heterotrimer of A, B and C subunits.

It carries out the reaction L-glutamyl-tRNA(Gln) + L-glutamine + ATP + H2O = L-glutaminyl-tRNA(Gln) + L-glutamate + ADP + phosphate + H(+). The enzyme catalyses L-aspartyl-tRNA(Asn) + L-glutamine + ATP + H2O = L-asparaginyl-tRNA(Asn) + L-glutamate + ADP + phosphate + 2 H(+). In terms of biological role, allows the formation of correctly charged Asn-tRNA(Asn) or Gln-tRNA(Gln) through the transamidation of misacylated Asp-tRNA(Asn) or Glu-tRNA(Gln) in organisms which lack either or both of asparaginyl-tRNA or glutaminyl-tRNA synthetases. The reaction takes place in the presence of glutamine and ATP through an activated phospho-Asp-tRNA(Asn) or phospho-Glu-tRNA(Gln). This is Aspartyl/glutamyl-tRNA(Asn/Gln) amidotransferase subunit B from Levilactobacillus brevis (strain ATCC 367 / BCRC 12310 / CIP 105137 / JCM 1170 / LMG 11437 / NCIMB 947 / NCTC 947) (Lactobacillus brevis).